A 520-amino-acid chain; its full sequence is Acetyltransferase MAT1 (520 aa).

Active-site proton acceptor residues include H183 and D456.

It belongs to the plant acyltransferase family.

It participates in secondary metabolite biosynthesis. Functionally, acyl-CoA-dependent acyltransferase; part of the gene cluster that mediates the biosynthesis of mannosylerythritol lipids (MELs), surface-active substances that enhance the availability of water-insoluble substrates. Depending on the number of acetyl groups, mannosylerythritol lipids can be differentiated into MEL A (fully acetylated), MEL B and MEL C (monoacetylated at R-6 and R-4, respectively), and the fully deacetylated MEL D. The first step in the pathway is the generation of mannosylerythritol by the glycosyltransferase EMT1 which catalyzes the transfer of GDP-mannose to the C-4 atom of meso-erythritol. This reaction has to be stereospecific, since only mannosyl-D-erythritol is generated. The produced disaccharide is subsequently acylated with fatty acids of various lengths by the acyltransferases MAC1 and MAC2 at positions C-2 and C-3, repectively. The existence of MEL derivatives which carry an acetyl group at C-2 implies that at least MAC1 also accepts acetyl-CoA as a donor. The final step of MEL biosynthesis is the acetylation of the fully acylated mannosylerythritol lipids catalyzed by the acetyl-CoA-dependent acetyltransferase MAT1. MAT1 displays a relaxed regioselectivity and is able to transfer acetylgroups to both positions C-4 and C-6 of the mannosyl moiety. This Pseudozyma antarctica (strain T-34) (Yeast) protein is Acetyltransferase MAT1.